The following is a 263-amino-acid chain: Isoprenyl transferase (263 aa).

Residue Asp-26 is part of the active site. Asp-26 is a binding site for Mg(2+). Substrate is bound by residues 27-30, Trp-31, Arg-39, His-43, and 71-73; these read GNGR and SSE. The active-site Proton acceptor is Asn-74. Residues Trp-75, Arg-77, Arg-191, and 197–199 contribute to the substrate site; that span reads RIS. Position 210 (Glu-210) interacts with Mg(2+). Positions 241–263 are disordered; sequence GRTSEQIAGQQENKNTVSNEDRV. Over residues 243-263 the composition is skewed to polar residues; that stretch reads TSEQIAGQQENKNTVSNEDRV.

Belongs to the UPP synthase family. In terms of assembly, homodimer. Requires Mg(2+) as cofactor.

Catalyzes the condensation of isopentenyl diphosphate (IPP) with allylic pyrophosphates generating different type of terpenoids. This is Isoprenyl transferase from Nitrosomonas europaea (strain ATCC 19718 / CIP 103999 / KCTC 2705 / NBRC 14298).